We begin with the raw amino-acid sequence, 312 residues long: uncharacterized protein (312 aa).

An HTH lysR-type domain is found at 8–65 (PGLTCFEIFLAIAEAGSLGGAARELGLTQQAVSRRLASMEAQIGVRLAIRTTRGSQLT). The H-T-H motif DNA-binding region spans 25-45 (LGGAARELGLTQQAVSRRLAS).

The protein belongs to the LysR transcriptional regulatory family.

This is an uncharacterized protein from Mycobacterium tuberculosis (strain CDC 1551 / Oshkosh).